A 467-amino-acid polypeptide reads, in one-letter code: Neutrophil collagenase (467 aa).

An N-terminal signal peptide occupies residues M1–A20. Residues F21–M100 constitute a propeptide, activation peptide. N54 and N73 each carry an N-linked (GlcNAc...) asparagine glycan. Residues P89–S96 carry the Cysteine switch motif. C91 contacts Zn(2+). N112 carries an N-linked (GlcNAc...) asparagine glycan. D157 contributes to the Ca(2+) binding site. Zn(2+)-binding residues include H167 and D169. Ca(2+) contacts are provided by D174, G175, N177, and I179. H182 serves as a coordination point for Zn(2+). Ca(2+) is bound by residues G189, G191, and D193. H195 serves as a coordination point for Zn(2+). D197 and E200 together coordinate Ca(2+). N204 carries an N-linked (GlcNAc...) asparagine glycan. Zn(2+) is bound at residue H217. E218 is an active-site residue. The Zn(2+) site is built by H221 and H227. Residue N246 is glycosylated (N-linked (GlcNAc...) asparagine). Hemopexin repeat units lie at residues P276–L325, P326–S372, V374–I420, and E421–C464. A disulfide bond links C279 and C464. D286 provides a ligand contact to Ca(2+). Positions 378 and 425 each coordinate Ca(2+).

This sequence belongs to the peptidase M10A family. The cofactor is Ca(2+). It depends on Zn(2+) as a cofactor. In terms of tissue distribution, neutrophils.

Its subcellular location is the cytoplasmic granule. It localises to the secreted. The protein resides in the extracellular space. It is found in the extracellular matrix. The enzyme catalyses Cleavage of interstitial collagens in the triple helical domain. Unlike EC 3.4.24.7, this enzyme cleaves type III collagen more slowly than type I.. Cannot be activated without removal of the activation peptide. In terms of biological role, can degrade fibrillar type I, II, and III collagens. This chain is Neutrophil collagenase (MMP8), found in Homo sapiens (Human).